Consider the following 434-residue polypeptide: MNIIVVGLSHKTASVDIREKVAFSPNSIEKPLHELVNLDGIVEGIIVSTCNRVEIYATTRDIAGGIARIRRFMAEYHHLAHDLLEPHLYSYHGEEAIRHVFRVASSLDSMVVGEPQILGQIKTSYGYAAEYKSSGIILNRFLHKAFSVAKRVRTETRIASSAVSVSFAAVELARKIFGNLTDKTVLLIGAGEMCELAARHFLTNGAKGVMVTNRTFERAQRLAEEFGGEAIPFDELFLHLHKADIVLTSTGAPHAIITPPDLEEVIKRRRMRPMFLIDIAVPRDIDPAVNEMDAVYLYDMDDLQQVVAANLEGRKQEADKAEAIIAEEIIQFYKWVATLEVTPTIVALRNRFEELRKAELERTLAGWKDAPPDAEKRLEALTSAFMNKLLHQPTTVLKKAGQGNRTDLYLDALRALFDLELGGTDTNESLELEE.

Substrate-binding positions include 49–52, serine 109, 114–116, and glutamine 120; these read TCNR and EPQ. Residue cysteine 50 is the Nucleophile of the active site. NADP(+) is bound at residue 189–194; the sequence is GAGEMC.

This sequence belongs to the glutamyl-tRNA reductase family. Homodimer.

It catalyses the reaction (S)-4-amino-5-oxopentanoate + tRNA(Glu) + NADP(+) = L-glutamyl-tRNA(Glu) + NADPH + H(+). The protein operates within porphyrin-containing compound metabolism; protoporphyrin-IX biosynthesis; 5-aminolevulinate from L-glutamyl-tRNA(Glu): step 1/2. In terms of biological role, catalyzes the NADPH-dependent reduction of glutamyl-tRNA(Glu) to glutamate 1-semialdehyde (GSA). The chain is Glutamyl-tRNA reductase from Trichlorobacter lovleyi (strain ATCC BAA-1151 / DSM 17278 / SZ) (Geobacter lovleyi).